We begin with the raw amino-acid sequence, 397 residues long: Aurora kinase A (397 aa).

Positions 1–118 are disordered; that stretch reads MDRCKENCVS…SIQKTEDSKK (118 aa). Composition is skewed to polar residues over residues 29 to 55 and 84 to 102; these read QIPSQHPGSASSGQAQRVLCPSNSQRV and RLSNPQKSEQPQPAASGNN. 2 positions are modified to phosphoserine: serine 40 and serine 50. The span at 103-118 shows a compositional bias: basic and acidic residues; the sequence is SEKEQTSIQKTEDSKK. Positions 126–376 constitute a Protein kinase domain; it reads FDIGRPLGKG…LAEVLEHPWI (251 aa). ATP is bound by residues lysine 136, lysine 155, and 203–206; that span reads LEYA. The Proton acceptor role is filled by aspartate 249. A Glycyl lysine isopeptide (Lys-Gly) (interchain with G-Cter in SUMO2) cross-link involves residue lysine 251. Residues 253 to 254 and aspartate 267 each bind ATP; that span reads EN. The tract at residues 273–286 is activation segment; the sequence is HAPSSRRTTLCGTL. Phosphothreonine occurs at positions 280 and 281. Serine 335 carries the phosphoserine; by PKA and PAK modification. A compositionally biased stretch (polar residues) spans 378-387; it reads ANSSKPPTGH. The disordered stretch occupies residues 378–397; sequence ANSSKPPTGHNSKEATSKSS. Over residues 388–397 the composition is skewed to basic and acidic residues; the sequence is NSKEATSKSS.

The protein belongs to the protein kinase superfamily. Ser/Thr protein kinase family. Aurora subfamily. Part of a complex composed of NEDD9, AURKA and CTTN; within the complex NEDD9 acts as a scaffold protein and is required for complex formation. Identified in a complex with AUNIP and NIN. Interacts with CPEB1, JTB, TACC1, TPX2, PPP2CA, as well as with the protein phosphatase type 1 (PP1) isoforms PPP1CA, PPP1CB and PPP1CC. Also interacts with its substrates ARHGEF2, BORA, KIF2A, PARD3, and p53/TP53. Interaction with BORA promotes phosphorylation of PLK1. Interacts with FBXL7 and CIMAP3. Interacts with GADD45A, competing with its oligomerization. Interacts (via C-terminus) with AUNIP (via C-terminus). Interacts with SIRT2. Interacts with FRY; this interaction facilitates AURKA-mediated PLK1 phosphorylation. Interacts with MYCN; interaction is phospho-independent and triggers AURKA activation; AURKA competes with FBXW7 for binding to unphosphorylated MYCN but not for binding to phosphorylated MYCN. Interacts with HNRNPU. Interacts with AAAS. Interacts with KLHL18 and CUL3. Interacts with FOXP1. Interacts with HDAC6; AURKA-mediated phosphorylation of HDAC6 promotes deacetylation of alpha-tubulin. Activated by phosphorylation at Thr-281; this brings about a change in the conformation of the activation segment. Phosphorylation at Thr-281 varies during the cell cycle and is highest during M phase. Autophosphorylated at Thr-281 upon TPX2 binding. Thr-281 can be phosphorylated by several kinases, including PAK and PKA. Protein phosphatase type 1 (PP1) binds AURKA and inhibits its activity by dephosphorylating Thr-281 during mitosis. Phosphorylation at Ser-335 decreases the kinase activity. PPP2CA controls degradation by dephosphorylating Ser-52 at the end of mitosis. Phosphorylated in embryonic brain neurons. Post-translationally, ubiquitinated by CHFR, leading to its degradation by the proteasome. Ubiquitinated by the anaphase-promoting complex (APC), leading to its degradation by the proteasome. Ubiquitinated by the E3 ubiquitin-protein ligase complex SCF(FBXL7) during mitosis, leading to its degradation by the proteasome. Ubiquitinated by the CUL3-KLHL18 ligase leading to its activation at the centrosome which is required for initiating mitotic entry. Ubiquitination mediated by CUL3-KLHL18 ligase does not lead to its degradation by the proteasome. Detected in neurons in brain cortex and hippocampus (at protein level). Expressed in mammary gland and tumor.

The protein resides in the cytoplasm. Its subcellular location is the cytoskeleton. The protein localises to the microtubule organizing center. It is found in the centrosome. It localises to the spindle pole. The protein resides in the centriole. Its subcellular location is the cell projection. The protein localises to the neuron projection. It is found in the cilium. It localises to the cilium basal body. The protein resides in the basolateral cell membrane. It carries out the reaction L-seryl-[protein] + ATP = O-phospho-L-seryl-[protein] + ADP + H(+). It catalyses the reaction L-threonyl-[protein] + ATP = O-phospho-L-threonyl-[protein] + ADP + H(+). Activation of CDK1, appears to be an upstream event of AURKA activation. Phosphatase inhibitor-2 (PPP1R2) and TPX2 act also as activators. Inactivated by the G2 checkpoint. Inhibited by GADD45A and p53/TP53, and through dephosphorylation by protein phosphatase type 1 (PP1). MLN8054 is also a potent and selective inhibitor. Activated during the early phase of cilia disassembly in the presence of FBXL7 and CIMAP3. Inhibited by the small molecule inhibitor VX-680. Functionally, mitotic serine/threonine kinase that contributes to the regulation of cell cycle progression. Associates with the centrosome and the spindle microtubules during mitosis and plays a critical role in various mitotic events including the establishment of mitotic spindle, centrosome duplication, centrosome separation as well as maturation, chromosomal alignment, spindle assembly checkpoint, and cytokinesis. Required for normal spindle positioning during mitosis and for the localization of NUMA1 and DCTN1 to the cell cortex during metaphase. Required for initial activation of CDK1 at centrosomes. Phosphorylates numerous target proteins, including ARHGEF2, BORA, BRCA1, CDC25B, DLGP5, HDAC6, KIF2A, LATS2, NDEL1, PARD3, PPP1R2, PLK1, RASSF1, TACC3, p53/TP53 and TPX2. Phosphorylates MCRS1 which is required for MCRS1-mediated kinetochore fiber assembly and mitotic progression. Regulates KIF2A tubulin depolymerase activity. Required for normal axon formation. Plays a role in microtubule remodeling during neurite extension. Important for microtubule formation and/or stabilization. Also acts as a key regulatory component of the p53/TP53 pathway, and particularly the checkpoint-response pathways critical for oncogenic transformation of cells, by phosphorylating and stabilizating p53/TP53. Phosphorylates its own inhibitors, the protein phosphatase type 1 (PP1) isoforms, to inhibit their activity. Inhibits cilia outgrowth. Required for cilia disassembly via phosphorylation of HDAC6 and subsequent deacetylation of alpha-tubulin. Regulates protein levels of the anti-apoptosis protein BIRC5 by suppressing the expression of the SCF(FBXL7) E3 ubiquitin-protein ligase substrate adapter FBXL7 through the phosphorylation of the transcription factor FOXP1. The chain is Aurora kinase A from Rattus norvegicus (Rat).